A 214-amino-acid polypeptide reads, in one-letter code: Leucyl/phenylalanyl-tRNA--protein transferase (214 aa).

Residues 194–214 form a disordered region; the sequence is FAPPGYSPDPASVVQRSSQTS.

The protein belongs to the L/F-transferase family.

The protein localises to the cytoplasm. The enzyme catalyses N-terminal L-lysyl-[protein] + L-leucyl-tRNA(Leu) = N-terminal L-leucyl-L-lysyl-[protein] + tRNA(Leu) + H(+). It carries out the reaction N-terminal L-arginyl-[protein] + L-leucyl-tRNA(Leu) = N-terminal L-leucyl-L-arginyl-[protein] + tRNA(Leu) + H(+). It catalyses the reaction L-phenylalanyl-tRNA(Phe) + an N-terminal L-alpha-aminoacyl-[protein] = an N-terminal L-phenylalanyl-L-alpha-aminoacyl-[protein] + tRNA(Phe). Its function is as follows. Functions in the N-end rule pathway of protein degradation where it conjugates Leu, Phe and, less efficiently, Met from aminoacyl-tRNAs to the N-termini of proteins containing an N-terminal arginine or lysine. This chain is Leucyl/phenylalanyl-tRNA--protein transferase, found in Cereibacter sphaeroides (strain ATCC 17025 / ATH 2.4.3) (Rhodobacter sphaeroides).